Consider the following 338-residue polypeptide: UDP-N-acetylglucosamine--N-acetylmuramyl-(pentapeptide) pyrophosphoryl-undecaprenol N-acetylglucosamine transferase (338 aa).

UDP-N-acetyl-alpha-D-glucosamine-binding positions include 10 to 12 (TGG), Asn-122, Ser-177, and Gln-275.

It belongs to the glycosyltransferase 28 family. MurG subfamily.

It is found in the cell inner membrane. It carries out the reaction di-trans,octa-cis-undecaprenyl diphospho-N-acetyl-alpha-D-muramoyl-L-alanyl-D-glutamyl-meso-2,6-diaminopimeloyl-D-alanyl-D-alanine + UDP-N-acetyl-alpha-D-glucosamine = di-trans,octa-cis-undecaprenyl diphospho-[N-acetyl-alpha-D-glucosaminyl-(1-&gt;4)]-N-acetyl-alpha-D-muramoyl-L-alanyl-D-glutamyl-meso-2,6-diaminopimeloyl-D-alanyl-D-alanine + UDP + H(+). It participates in cell wall biogenesis; peptidoglycan biosynthesis. In terms of biological role, cell wall formation. Catalyzes the transfer of a GlcNAc subunit on undecaprenyl-pyrophosphoryl-MurNAc-pentapeptide (lipid intermediate I) to form undecaprenyl-pyrophosphoryl-MurNAc-(pentapeptide)GlcNAc (lipid intermediate II). The sequence is that of UDP-N-acetylglucosamine--N-acetylmuramyl-(pentapeptide) pyrophosphoryl-undecaprenol N-acetylglucosamine transferase from Sulfurovum sp. (strain NBC37-1).